Consider the following 350-residue polypeptide: tRNA uridine(34) hydroxylase (350 aa).

The region spanning 146-240 (DDPDALFIDM…YARKAREQGL (95 aa)) is the Rhodanese domain. Cys200 acts as the Cysteine persulfide intermediate in catalysis.

It belongs to the TrhO family.

It carries out the reaction uridine(34) in tRNA + AH2 + O2 = 5-hydroxyuridine(34) in tRNA + A + H2O. Catalyzes oxygen-dependent 5-hydroxyuridine (ho5U) modification at position 34 in tRNAs, the first step in 5-carboxymethoxyuridine (cmo5U) biosynthesis. May be part of an alternate pathway, which is able to bypass cmo5U biogenesis in a subset of tRNAs under aerobic conditions. In Escherichia coli O45:K1 (strain S88 / ExPEC), this protein is tRNA uridine(34) hydroxylase.